The following is a 561-amino-acid chain: Arginine--tRNA ligase (561 aa).

The 'HIGH' region motif lies at 128–138 (ANPTGPLHVGH).

It belongs to the class-I aminoacyl-tRNA synthetase family. Monomer.

Its subcellular location is the cytoplasm. It catalyses the reaction tRNA(Arg) + L-arginine + ATP = L-arginyl-tRNA(Arg) + AMP + diphosphate. The chain is Arginine--tRNA ligase from Methylibium petroleiphilum (strain ATCC BAA-1232 / LMG 22953 / PM1).